The chain runs to 320 residues: E3 ubiquitin-protein ligase RZF1 (320 aa).

The residue at position 2 (Ser-2) is an N-acetylserine. An RING-type; atypical zinc finger spans residues 186–227 (CPVCKDEFELKSEAKQMPCHHIYHSDCIVPWLVQHNSCPVCR). Residues 229–320 (ELPSRGSSSS…MGYSGWPFDY (92 aa)) form a disordered region. 2 stretches are compositionally biased toward low complexity: residues 232-249 (SRGS…STNG) and 295-308 (QQQQ…QQQQ).

In terms of tissue distribution, expressed in seedlings and in flowers.

The catalysed reaction is S-ubiquitinyl-[E2 ubiquitin-conjugating enzyme]-L-cysteine + [acceptor protein]-L-lysine = [E2 ubiquitin-conjugating enzyme]-L-cysteine + N(6)-ubiquitinyl-[acceptor protein]-L-lysine.. E3 ubiquitin-protein ligase that promotes osmotic stress and abscisic acid (ABA) responses. Negatively regulates drought-mediated control of early seedling development, probably by influencing proline content, water loss, membrane ion leakage and the expression of dehydration stress-related genes (e.g. RAB18, RD29A, RD29B, AOX1A, ERD15, ERD1, COR15A, P5CS1 and P5CR). Modulates bZIP11 accumulation during rehydration following drought. In Arabidopsis thaliana (Mouse-ear cress), this protein is E3 ubiquitin-protein ligase RZF1.